We begin with the raw amino-acid sequence, 365 residues long: Histidinol-phosphate aminotransferase (365 aa).

An N6-(pyridoxal phosphate)lysine modification is found at K220.

The protein belongs to the class-II pyridoxal-phosphate-dependent aminotransferase family. Histidinol-phosphate aminotransferase subfamily. Homodimer. Pyridoxal 5'-phosphate is required as a cofactor.

It catalyses the reaction L-histidinol phosphate + 2-oxoglutarate = 3-(imidazol-4-yl)-2-oxopropyl phosphate + L-glutamate. Its pathway is amino-acid biosynthesis; L-histidine biosynthesis; L-histidine from 5-phospho-alpha-D-ribose 1-diphosphate: step 7/9. This Xylella fastidiosa (strain 9a5c) protein is Histidinol-phosphate aminotransferase.